Here is a 370-residue protein sequence, read N- to C-terminus: MEGLKVTPLRGVYEEYGGKIVDFAGYELPTQFKGFLHEHHTVREKAGLFDVSHMGEATVKGKDAQKFVQYLMTNDINVLKDNEVLYTFMCNEDGGVIDDLLVYKFAEDEFFLVINASNKDKDVKWILDHKGDFDVEIVDVSDSIAQLAFQGPLAEEILQKIVDVDLQEIKFFKLKRDVLVNGKKCLVSRTGYTGEDGFEIYCKPEDAKGLWHAILNAGKEEGAQPIGLGARDTLRFEASLLLYGNEMDETITPLEVGMGFFVKLKVEEDFIGKDALIKQKAEGVTRKLVGFELLDKGIPRHGYEVIKDGKVIGHVTTGYKSPTLNKAIGLALVEEQYSKIGTEFNIKVRKKELKAVAIDKRFYTKKTKTK.

This sequence belongs to the GcvT family. In terms of assembly, the glycine cleavage system is composed of four proteins: P, T, L and H.

The enzyme catalyses N(6)-[(R)-S(8)-aminomethyldihydrolipoyl]-L-lysyl-[protein] + (6S)-5,6,7,8-tetrahydrofolate = N(6)-[(R)-dihydrolipoyl]-L-lysyl-[protein] + (6R)-5,10-methylene-5,6,7,8-tetrahydrofolate + NH4(+). Its function is as follows. The glycine cleavage system catalyzes the degradation of glycine. The polypeptide is Aminomethyltransferase (Clostridium botulinum (strain 657 / Type Ba4)).